The chain runs to 146 residues: VEWTDKERSIISDIFSHMDYDDIGPKALSRCLVVYPWTQRYFSGFGNLYNAEGIMSNANVAAHGIKVLHGLDRGMKNMDNIADAYTDLSTLHSEKLHVDPDNFKLLSDCITIVLAAKMGHAFTAETQGAFQKFLAAVVSALGKQYH.

In terms of domain architecture, Globin spans 2-146 (EWTDKERSII…VVSALGKQYH (145 aa)). Residues H63 and H92 each coordinate heme b.

This sequence belongs to the globin family. As to quaternary structure, hb1 is a heterotetramer of two alpha-1 chains and two beta chains. Hb2 is a heterotetramer of two alpha-2 chains and two beta chains. Red blood cells.

In terms of biological role, involved in oxygen transport from gills to the various peripheral tissues. This Trematomus newnesi (Dusky notothen) protein is Hemoglobin subunit beta-1/2.